The sequence spans 773 residues: 5-methyltetrahydropteroyltriglutamate--homocysteine methyltransferase (773 aa).

5-methyltetrahydropteroyltri-L-glutamate contacts are provided by residues 16–19 (RELK) and Lys116. Residues 437 to 439 (IGS) and Glu490 each bind L-homocysteine. Residues 437 to 439 (IGS) and Glu490 contribute to the L-methionine site. 5-methyltetrahydropteroyltri-L-glutamate-binding positions include 521–522 (RC) and Trp567. Residue Asp605 coordinates L-homocysteine. Asp605 contacts L-methionine. Glu611 is a binding site for 5-methyltetrahydropteroyltri-L-glutamate. The Zn(2+) site is built by His647, Cys649, and Glu671. His700 serves as the catalytic Proton donor. Cys732 serves as a coordination point for Zn(2+).

This sequence belongs to the vitamin-B12 independent methionine synthase family. The cofactor is Zn(2+).

The catalysed reaction is 5-methyltetrahydropteroyltri-L-glutamate + L-homocysteine = tetrahydropteroyltri-L-glutamate + L-methionine. Its pathway is amino-acid biosynthesis; L-methionine biosynthesis via de novo pathway; L-methionine from L-homocysteine (MetE route): step 1/1. Catalyzes the transfer of a methyl group from 5-methyltetrahydrofolate to homocysteine resulting in methionine formation. This chain is 5-methyltetrahydropteroyltriglutamate--homocysteine methyltransferase, found in Alkalilimnicola ehrlichii (strain ATCC BAA-1101 / DSM 17681 / MLHE-1).